Consider the following 476-residue polypeptide: Cytosolic Fe-S cluster assembly factor narfl (476 aa).

Positions 24, 71, 74, 77, 190, 246, 395, and 399 each coordinate [4Fe-4S] cluster.

Belongs to the NARF family. In terms of assembly, component of the CIA complex.

Component of the cytosolic iron-sulfur protein assembly (CIA) complex, a multiprotein complex that mediates the incorporation of iron-sulfur cluster into extramitochondrial Fe/S proteins. The chain is Cytosolic Fe-S cluster assembly factor narfl (narfl) from Xenopus tropicalis (Western clawed frog).